Reading from the N-terminus, the 62-residue chain is MIPVRCFTCGKVISTAYEEFKRRRDASEDPKRILDDLGMDRYCCRRMLLTHKEIIDELNPYQ.

4 residues coordinate Zn(2+): cysteine 6, cysteine 9, cysteine 43, and cysteine 44.

It belongs to the archaeal Rpo10/eukaryotic RPB10 RNA polymerase subunit family. In terms of assembly, part of the RNA polymerase complex. The cofactor is Zn(2+).

It is found in the cytoplasm. The enzyme catalyses RNA(n) + a ribonucleoside 5'-triphosphate = RNA(n+1) + diphosphate. DNA-dependent RNA polymerase (RNAP) catalyzes the transcription of DNA into RNA using the four ribonucleoside triphosphates as substrates. This Methanospirillum hungatei JF-1 (strain ATCC 27890 / DSM 864 / NBRC 100397 / JF-1) protein is DNA-directed RNA polymerase subunit Rpo10.